The following is a 400-amino-acid chain: tRNA(Met) cytidine acetate ligase (400 aa).

ATP is bound by residues 7–20 (IVEY…HLYH), Gly101, Asn159, and 184–185 (RI).

It belongs to the TmcAL family.

Its subcellular location is the cytoplasm. It carries out the reaction cytidine(34) in elongator tRNA(Met) + acetate + ATP = N(4)-acetylcytidine(34) in elongator tRNA(Met) + AMP + diphosphate. In terms of biological role, catalyzes the formation of N(4)-acetylcytidine (ac(4)C) at the wobble position of elongator tRNA(Met), using acetate and ATP as substrates. First activates an acetate ion to form acetyladenylate (Ac-AMP) and then transfers the acetyl group to tRNA to form ac(4)C34. The protein is tRNA(Met) cytidine acetate ligase of Caldicellulosiruptor bescii (strain ATCC BAA-1888 / DSM 6725 / KCTC 15123 / Z-1320) (Anaerocellum thermophilum).